Here is a 235-residue protein sequence, read N- to C-terminus: Pyridoxine/pyridoxamine 5'-phosphate oxidase (235 aa).

Residues 30–33 (RQEY) and Lys88 contribute to the substrate site. FMN is bound by residues 83–88 (RTVLLK), 98–99 (YT), Arg104, Lys105, and Gln127. Tyr145, Arg149, and Ser153 together coordinate substrate. FMN is bound by residues 162 to 163 (QS) and Trp207. 213–215 (RLH) contributes to the substrate binding site. Arg217 is a binding site for FMN.

The protein belongs to the pyridoxamine 5'-phosphate oxidase family. Homodimer. The cofactor is FMN.

The enzyme catalyses pyridoxamine 5'-phosphate + O2 + H2O = pyridoxal 5'-phosphate + H2O2 + NH4(+). It carries out the reaction pyridoxine 5'-phosphate + O2 = pyridoxal 5'-phosphate + H2O2. It functions in the pathway cofactor metabolism; pyridoxal 5'-phosphate salvage; pyridoxal 5'-phosphate from pyridoxamine 5'-phosphate: step 1/1. The protein operates within cofactor metabolism; pyridoxal 5'-phosphate salvage; pyridoxal 5'-phosphate from pyridoxine 5'-phosphate: step 1/1. Functionally, catalyzes the oxidation of either pyridoxine 5'-phosphate (PNP) or pyridoxamine 5'-phosphate (PMP) into pyridoxal 5'-phosphate (PLP). The sequence is that of Pyridoxine/pyridoxamine 5'-phosphate oxidase from Bacteroides fragilis (strain YCH46).